Here is a 337-residue protein sequence, read N- to C-terminus: Protein ABHD13 (337 aa).

Residues 30 to 50 form a helical; Signal-anchor for type II membrane protein membrane-spanning segment; the sequence is LLALILTFHLYGGFVLLGLIL. Residues Ser193, Asp268, and His298 each act as charge relay system in the active site. Asn299 is a glycosylation site (N-linked (GlcNAc...) asparagine).

It belongs to the serine esterase family.

Its subcellular location is the membrane. This chain is Protein ABHD13, found in Danio rerio (Zebrafish).